We begin with the raw amino-acid sequence, 284 residues long: Tropomyosin alpha-1 chain (284 aa).

An N-acetylmethionine modification is found at M1. Positions 1–38 are disordered; sequence MDAIKKKMQMLKLDKENALDRAEQAEADKKAAEDRSKQ. A coiled-coil region spans residues 1–284; sequence MDAIKKKMQM…DHALNDMTSI (284 aa). Over residues 12–38 the composition is skewed to basic and acidic residues; that stretch reads KLDKENALDRAEQAEADKKAAEDRSKQ. Phosphoserine is present on S45. The segment at 116 to 136 is disordered; that stretch reads AEKAADESERGMKVIESRAQK. Phosphoserine is present on residues S174, S186, S206, and S252. Position 261 is a phosphotyrosine (Y261). S271 and S283 each carry phosphoserine.

Belongs to the tropomyosin family. Homodimer. Heterodimer of an alpha (TPM1, TPM3 or TPM4) and a beta (TPM2) chain. Interacts with HRG (via the HRR domain); the interaction contributes to the antiangiogenic properties of the histidine/proline-rich region (HRR) of HRG. Interacts (via N-terminus) with LMOD2 (via N-terminus) and TMOD1 (via N-terminus). Post-translationally, phosphorylated at Ser-283 by DAPK1 in response to oxidative stress and this phosphorylation enhances stress fiber formation in endothelial cells.

It localises to the cytoplasm. The protein localises to the cytoskeleton. Binds to actin filaments in muscle and non-muscle cells. Plays a central role, in association with the troponin complex, in the calcium dependent regulation of vertebrate striated muscle contraction. Smooth muscle contraction is regulated by interaction with caldesmon. In non-muscle cells is implicated in stabilizing cytoskeleton actin filaments. The protein is Tropomyosin alpha-1 chain (Tpm1) of Mus musculus (Mouse).